The primary structure comprises 1099 residues: Exonuclease/helicase subunit RexB (1099 aa).

4 residues coordinate [4Fe-4S] cluster: cysteine 766, cysteine 1056, cysteine 1059, and cysteine 1065.

This sequence belongs to the helicase family. AddB/RexB type 2 subfamily. Heterodimer of RexA (AddA) and RexB. Mg(2+) is required as a cofactor. Requires [4Fe-4S] cluster as cofactor.

The heterodimer acts both as an ATP-dependent DNA helicase and an ATP-dependent, dual-direction single-stranded exonuclease. Recognizes the L.lactis chi site (5'-GCGCGTG-3'), which stimulates homologous recombination. This subunit has 5'-&gt;3' exonuclease activity. Its function is as follows. The heterodimer acts as both an ATP-dependent DNA helicase and an ATP-dependent, dual-direction single-stranded exonuclease. Recognizes the chi site generating a DNA molecule suitable for the initiation of homologous recombination. This subunit has 5' -&gt; 3' nuclease activity but not helicase activity. This Lactococcus lactis subsp. cremoris (strain MG1363) protein is Exonuclease/helicase subunit RexB.